The sequence spans 160 residues: CXXC motif containing zinc binding protein (160 aa).

C33, C36, C67, and C70 together coordinate Zn(2+). At S75 the chain carries Phosphoserine.

This sequence belongs to the UPF0587 family. Monomer.

This Rattus norvegicus (Rat) protein is CXXC motif containing zinc binding protein.